Here is a 588-residue protein sequence, read N- to C-terminus: Snake venom 5'-nucleotidase (588 aa).

Residues Met1–Gly40 form the signal peptide. Asp51 and His53 together coordinate Zn(2+). A disulfide bridge links Cys66 with Cys71. Zn(2+) contacts are provided by Asp99 and Asn131. Asn167 carries N-linked (GlcNAc...) asparagine glycosylation. Zn(2+) is bound by residues His234 and His257. Asn347 and Asn361 each carry an N-linked (GlcNAc...) asparagine glycan. 2 cysteine pairs are disulfide-bonded: Cys367-Cys372 and Cys379-Cys401. Arg368 is an AMP binding site. Positions 404 and 409 each coordinate AMP. Asn418 is a glycosylation site (N-linked (GlcNAc...) asparagine). Phe432 contributes to the AMP binding site. Residues Cys491 and Cys494 are joined by a disulfide bond. Residues Phe515 and Asp521 each coordinate AMP. N-linked (GlcNAc...) asparagine glycosylation occurs at Asn532. The GPI-anchor amidated serine moiety is linked to residue Ser564. Positions Ala565–Leu588 are cleaved as a propeptide — removed in mature form.

This sequence belongs to the 5'-nucleotidase family. Requires Zn(2+) as cofactor. In terms of processing, venom 5'-nucleotidases (or a part thereof) may be released into the venom via exosome-like vesicles. They may be attached via a GPI anchor to the membrane of these vesicles. Soluble forms of 5'-nucleotidase might be released by cleavage of the ectodomain in the exosome-like vesicles or venom gland cells. As to expression, expressed by the venom gland.

Its subcellular location is the membrane. It catalyses the reaction a ribonucleoside 5'-phosphate + H2O = a ribonucleoside + phosphate. Its function is as follows. Hydrolyzes nucleotides into nucleosides. Snake venom 5'-nucleotidases are widely distributed among venomous snake taxa, but there is a lack of information about their biological activities. They have been shown to inhibit platelet aggregation. This effect may be due to the liberation of inhibitory AMP or adenosine by its action on ADP released upon initiation of aggregation. Venom 5'-nucleotidases are also known to synergistically act in vivo with other toxins like ADPases, phospholipases, and disintegrins to exert a more pronounced anti-coagulant effect. This is Snake venom 5'-nucleotidase from Crotalus adamanteus (Eastern diamondback rattlesnake).